The primary structure comprises 222 residues: Superoxide dismutase [Mn], mitochondrial (222 aa).

The transit peptide at 1–24 (MLSRAVCGTSRQLAPVLGYLGSRQ) directs the protein to the mitochondrion. Histidine 50 provides a ligand contact to Mn(2+). Tyrosine 58 bears the 3'-nitrotyrosine mark. An N6-acetyllysine; alternate mark is found at lysine 68 and lysine 75. An N6-succinyllysine; alternate mark is found at lysine 68 and lysine 75. Histidine 98 contributes to the Mn(2+) binding site. Lysine 114 carries the post-translational modification N6-acetyllysine. Lysine 122 and lysine 130 each carry N6-acetyllysine; alternate. N6-succinyllysine; alternate is present on residues lysine 122 and lysine 130. Mn(2+)-binding residues include aspartate 183 and histidine 187. At lysine 202 the chain carries N6-acetyllysine.

Belongs to the iron/manganese superoxide dismutase family. As to quaternary structure, homotetramer. The cofactor is Mn(2+). Post-translationally, nitrated under oxidative stress. Nitration coupled with oxidation inhibits the catalytic activity. Acetylation at Lys-122 decreases enzymatic activity. Deacetylated by SIRT3 upon exposure to ionizing radiations or after long fasting. In terms of processing, polyubiquitinated; leading to proteasomal degradation. Deubiquitinated by USP36 which increases protein stability.

It is found in the mitochondrion matrix. It catalyses the reaction 2 superoxide + 2 H(+) = H2O2 + O2. Functionally, destroys superoxide anion radicals which are normally produced within the cells and which are toxic to biological systems. The protein is Superoxide dismutase [Mn], mitochondrial (SOD2) of Homo sapiens (Human).